Reading from the N-terminus, the 398-residue chain is Elongation factor Tu (398 aa).

Residues 10–207 (KPHVNIGTIG…TADEYIPEPE (198 aa)) form the tr-type G domain. The segment at 19–26 (GHVDHGKT) is G1. Residue 19-26 (GHVDHGKT) participates in GTP binding. Thr26 contributes to the Mg(2+) binding site. A G2 region spans residues 63–67 (GITIN). The interval 84 to 87 (DAPG) is G3. GTP contacts are provided by residues 84 to 88 (DAPGH) and 139 to 142 (NKID). Positions 139 to 142 (NKID) are G4. The interval 177–179 (SAL) is G5.

Belongs to the TRAFAC class translation factor GTPase superfamily. Classic translation factor GTPase family. EF-Tu/EF-1A subfamily. Monomer.

The protein localises to the cytoplasm. The catalysed reaction is GTP + H2O = GDP + phosphate + H(+). Its function is as follows. GTP hydrolase that promotes the GTP-dependent binding of aminoacyl-tRNA to the A-site of ribosomes during protein biosynthesis. The chain is Elongation factor Tu from Streptococcus uberis (strain ATCC BAA-854 / 0140J).